Reading from the N-terminus, the 442-residue chain is Chromosomal replication initiator protein DnaA (442 aa).

The tract at residues 1 to 84 (MSVLWSHCIS…LEIGSRAAEA (84 aa)) is domain I, interacts with DnaA modulators. A domain II region spans residues 84–105 (AAQMRSANPPRKTAPARKQVPN). The segment at 106-322 (NLNSAFIFGN…GALRRVIANA (217 aa)) is domain III, AAA+ region. The ATP site is built by glycine 150, glycine 152, lysine 153, and threonine 154. A domain IV, binds dsDNA region spans residues 323-442 (QFTGRPITLE…FSNLLRILSN (120 aa)).

The protein belongs to the DnaA family. Oligomerizes as a right-handed, spiral filament on DNA at oriC.

It localises to the cytoplasm. Functionally, plays an essential role in the initiation and regulation of chromosomal replication. ATP-DnaA binds to the origin of replication (oriC) to initiate formation of the DNA replication initiation complex once per cell cycle. Binds the DnaA box (a 9 base pair repeat at the origin) and separates the double-stranded (ds)DNA. Forms a right-handed helical filament on oriC DNA; dsDNA binds to the exterior of the filament while single-stranded (ss)DNA is stabiized in the filament's interior. The ATP-DnaA-oriC complex binds and stabilizes one strand of the AT-rich DNA unwinding element (DUE), permitting loading of DNA polymerase. After initiation quickly degrades to an ADP-DnaA complex that is not apt for DNA replication. Binds acidic phospholipids. The sequence is that of Chromosomal replication initiator protein DnaA from Methylococcus capsulatus (strain ATCC 33009 / NCIMB 11132 / Bath).